A 139-amino-acid chain; its full sequence is Acidic phospholipase A2 BpPLA2-TXI (139 aa).

The signal sequence occupies residues 1-16 (MRTLWIMAVLLVGVEG). C44 and C60 are joined by a disulfide. 2 residues coordinate Ca(2+): G45 and G47. H63 is a catalytic residue. D64 is a Ca(2+) binding site. 3 cysteine pairs are disulfide-bonded: C65/C139, C73/C97, and C91/C102.

Belongs to the phospholipase A2 family. Group II subfamily. D49 sub-subfamily. The cofactor is Ca(2+). In terms of tissue distribution, expressed by the venom gland.

Its subcellular location is the secreted. It carries out the reaction a 1,2-diacyl-sn-glycero-3-phosphocholine + H2O = a 1-acyl-sn-glycero-3-phosphocholine + a fatty acid + H(+). PLA2 catalyzes the calcium-dependent hydrolysis of the 2-acyl groups in 3-sn-phosphoglycerides. This Bothrops pauloensis (Neuwied's lancehead) protein is Acidic phospholipase A2 BpPLA2-TXI.